The chain runs to 511 residues: Cobyric acid synthase (511 aa).

The GATase cobBQ-type domain occupies 251–443 (LLDIAIICLP…IHGIFDNDVF (193 aa)). Residue Cys-332 is the Nucleophile of the active site. His-435 is a catalytic residue.

This sequence belongs to the CobB/CobQ family. CobQ subfamily.

Its pathway is cofactor biosynthesis; adenosylcobalamin biosynthesis. Its function is as follows. Catalyzes amidations at positions B, D, E, and G on adenosylcobyrinic A,C-diamide. NH(2) groups are provided by glutamine, and one molecule of ATP is hydrogenolyzed for each amidation. This chain is Cobyric acid synthase, found in Listeria monocytogenes serotype 4b (strain F2365).